The chain runs to 375 residues: Chaperone protein DnaJ (375 aa).

The region spanning 4 to 68 is the J domain; sequence DYYETLGVDR…ETRARYDQFG (65 aa). Residues 134-216 form a CR-type zinc finger; it reads GGEKEIRIPH…CGGAGRKQET (83 aa). 8 residues coordinate Zn(2+): Cys147, Cys150, Cys164, Cys167, Cys190, Cys193, Cys204, and Cys207. 4 CXXCXGXG motif repeats span residues 147–154, 164–171, 190–197, and 204–211; these read CQVCNGSG, CSTCNGAG, CPDCNGAG, and CDACGGAG.

Belongs to the DnaJ family. As to quaternary structure, homodimer. Requires Zn(2+) as cofactor.

The protein resides in the cytoplasm. Participates actively in the response to hyperosmotic and heat shock by preventing the aggregation of stress-denatured proteins and by disaggregating proteins, also in an autonomous, DnaK-independent fashion. Unfolded proteins bind initially to DnaJ; upon interaction with the DnaJ-bound protein, DnaK hydrolyzes its bound ATP, resulting in the formation of a stable complex. GrpE releases ADP from DnaK; ATP binding to DnaK triggers the release of the substrate protein, thus completing the reaction cycle. Several rounds of ATP-dependent interactions between DnaJ, DnaK and GrpE are required for fully efficient folding. Also involved, together with DnaK and GrpE, in the DNA replication of plasmids through activation of initiation proteins. This is Chaperone protein DnaJ from Rippkaea orientalis (strain PCC 8801 / RF-1) (Cyanothece sp. (strain PCC 8801)).